We begin with the raw amino-acid sequence, 308 residues long: Tyrosine recombinase XerC (308 aa).

The Core-binding (CB) domain maps to 20-101 (SKLHTLIDDF…SVKAFSSWAQ (82 aa)). The region spanning 122–302 (DLPKILGEQQ…SNKRLLEAFN (181 aa)) is the Tyr recombinase domain. Residues Arg-163, Lys-187, His-254, Arg-257, and His-280 contribute to the active site. Tyr-289 serves as the catalytic O-(3'-phospho-DNA)-tyrosine intermediate.

It belongs to the 'phage' integrase family. XerC subfamily. As to quaternary structure, forms a cyclic heterotetrameric complex composed of two molecules of XerC and two molecules of XerD.

The protein resides in the cytoplasm. Its function is as follows. Site-specific tyrosine recombinase, which acts by catalyzing the cutting and rejoining of the recombining DNA molecules. The XerC-XerD complex is essential to convert dimers of the bacterial chromosome into monomers to permit their segregation at cell division. It also contributes to the segregational stability of plasmids. This Corynebacterium glutamicum (strain ATCC 13032 / DSM 20300 / JCM 1318 / BCRC 11384 / CCUG 27702 / LMG 3730 / NBRC 12168 / NCIMB 10025 / NRRL B-2784 / 534) protein is Tyrosine recombinase XerC.